Consider the following 686-residue polypeptide: Putative cuticle collagen 99 (686 aa).

Disordered regions lie at residues 42–79 and 163–444; these read PPIG…PVGP and GPIG…SLVA. Over residues 67-79 the composition is skewed to pro residues; that stretch reads PPGPPGERGPVGP. Triple-helical region regions lie at residues 142-201, 230-263, and 268-296; these read GMPG…KGDR, GPPG…GFDG, and GPKG…EKGD. Positions 231 to 243 are enriched in pro residues; that stretch reads PPGPPGPPGPPGP. The span at 246–256 shows a compositional bias: basic and acidic residues; sequence RDGRHGMKGDR. A compositionally biased stretch (low complexity) spans 306 to 318; it reads GQSVSTVSSSGSQ. Composition is skewed to basic and acidic residues over residues 361–373 and 401–417; these read EKGE…ETGD and RDGR…HGLR. The segment at 394-439 is triple-helical region; it reads GPPGPPGRDGRPGEKGEKGEHGLRGDMGLPGPEGTPGKRGRRGRHG. Asn446 and Asn535 each carry an N-linked (GlcNAc...) asparagine glycan. Residues 475–650 are disordered; that stretch reads KNVIPGPPGP…TGPDGLPLPY (176 aa). 3 triple-helical region regions span residues 479–536, 538–576, and 577–636; these read PGPP…SGNQ, GPRG…PGPM, and GLRG…PGLD. A compositionally biased stretch (pro residues) spans 540–549; that stretch reads RGPPGLPGPP. Low complexity predominate over residues 563-581; the sequence is QPGALGLPGHPGPMGLRGP.

It belongs to the cuticular collagen family. In terms of assembly, collagen polypeptide chains are complexed within the cuticle by disulfide bonds and other types of covalent cross-links.

In terms of biological role, nematode cuticles are composed largely of collagen-like proteins. The cuticle functions both as an exoskeleton and as a barrier to protect the worm from its environment. The sequence is that of Putative cuticle collagen 99 from Caenorhabditis briggsae.